Consider the following 265-residue polypeptide: NAD kinase 1 (265 aa).

Residue Asp-45 is the Proton acceptor of the active site. Residues 45–46 (DG), 122–123 (NE), Arg-148, Asp-150, and Ala-185 each bind NAD(+).

The protein belongs to the NAD kinase family. A divalent metal cation serves as cofactor.

It is found in the cytoplasm. It catalyses the reaction NAD(+) + ATP = ADP + NADP(+) + H(+). Functionally, involved in the regulation of the intracellular balance of NAD and NADP, and is a key enzyme in the biosynthesis of NADP. Catalyzes specifically the phosphorylation on 2'-hydroxyl of the adenosine moiety of NAD to yield NADP. This Bacillus cereus (strain ATCC 10987 / NRS 248) protein is NAD kinase 1.